The chain runs to 145 residues: Large ribosomal subunit protein bL17 (145 aa).

The protein belongs to the bacterial ribosomal protein bL17 family. As to quaternary structure, part of the 50S ribosomal subunit. Contacts protein L32.

In Francisella tularensis subsp. holarctica (strain FTNF002-00 / FTA), this protein is Large ribosomal subunit protein bL17.